A 221-amino-acid chain; its full sequence is GTP-binding nuclear protein Ran2 (221 aa).

A Small GTPase Ran-type domain is found at 10 to 174 (DYPSFKLVIV…LYLARKLAGD (165 aa)). Residue 21-28 (DGGTGKTT) coordinates GTP. The segment at 40–48 (KKYEPTIGV) is switch-I. GTP-binding positions include Gly71, 125 to 128 (NKVD), and 153 to 155 (SAK). Positions 71 to 87 (GQEKFGGLRDGYYIHGQ) are switch-II.

It belongs to the small GTPase superfamily. Ran family. As to quaternary structure, found in a nuclear export complex with RanGTP, exportin and pre-miRNA.

Its subcellular location is the nucleus. In terms of biological role, GTP-binding protein involved in nucleocytoplasmic transport. Required for the import of protein into the nucleus and also for RNA export. Involved in chromatin condensation and control of cell cycle. This chain is GTP-binding nuclear protein Ran2 (RAN2), found in Solanum lycopersicum (Tomato).